Here is a 907-residue protein sequence, read N- to C-terminus: Protein translocase subunit SecA (907 aa).

ATP contacts are provided by residues glutamine 87, 105–109 (GEGKT), and aspartate 510. Zn(2+)-binding residues include cysteine 892, cysteine 894, cysteine 903, and histidine 904.

This sequence belongs to the SecA family. Monomer and homodimer. Part of the essential Sec protein translocation apparatus which comprises SecA, SecYEG and auxiliary proteins SecDF-YajC and YidC. Requires Zn(2+) as cofactor.

It is found in the cell inner membrane. The protein localises to the cytoplasm. It catalyses the reaction ATP + H2O + cellular proteinSide 1 = ADP + phosphate + cellular proteinSide 2.. In terms of biological role, part of the Sec protein translocase complex. Interacts with the SecYEG preprotein conducting channel. Has a central role in coupling the hydrolysis of ATP to the transfer of proteins into and across the cell membrane, serving both as a receptor for the preprotein-SecB complex and as an ATP-driven molecular motor driving the stepwise translocation of polypeptide chains across the membrane. The polypeptide is Protein translocase subunit SecA (Acinetobacter baumannii (strain ATCC 17978 / DSM 105126 / CIP 53.77 / LMG 1025 / NCDC KC755 / 5377)).